A 1222-amino-acid chain; its full sequence is Serine/threonine-protein kinase WNK4 (1222 aa).

A compositionally biased stretch (polar residues) spans 1-17 (MLAPRNTETGVHMSQTE). Residues 1–163 (MLAPRNTETG…KEDTETQAVA (163 aa)) form a disordered region. Ser95 bears the Phosphoserine mark. Over residues 135 to 152 (EPPRVPDAAARERRREQE) the composition is skewed to basic and acidic residues. Glycyl lysine isopeptide (Lys-Gly) (interchain with G-Cter in ubiquitin) cross-links involve residues Lys154 and Lys172. A Protein kinase domain is found at 171–429 (LKFDIEIGRG…IQDLLTHAFF (259 aa)). Position 181 (Ser181) interacts with ATP. Glycyl lysine isopeptide (Lys-Gly) (interchain with G-Cter in ubiquitin) cross-links involve residues Lys183, Lys223, and Lys238. ATP is bound by residues 251–254 (TELM) and Lys301. Residue Asp318 is the Proton acceptor of the active site. Residue Lys325 forms a Glycyl lysine isopeptide (Lys-Gly) (interchain with G-Cter in ubiquitin) linkage. Phosphoserine; by autocatalysis occurs at positions 328 and 332. Glycyl lysine isopeptide (Lys-Gly) (interchain with G-Cter in ubiquitin) cross-links involve residues Lys384, Lys390, Lys447, and Lys451. A disordered region spans residues 527 to 562 (LEVLPPDSGPPPATVSMTPGPPSAFPPEPEEPEADQ). Over residues 533–553 (DSGPPPATVSMTPGPPSAFPP) the composition is skewed to pro residues. The segment at 554-564 (EPEEPEADQHQ) is interaction with KLHL3. Residue Ser572 is modified to Phosphoserine. Disordered stretches follow at residues 591–612 (FLDA…PAEP), 626–679 (RSGP…SVSD), 747–809 (DAGP…GTPF), 836–873 (QVSS…SPLP), and 927–1087 (SPGL…QPSP). The segment covering 627 to 638 (SGPGSDFSPGDS) has biased composition (low complexity). Positions 659–672 (NPVKTLRRRPRSRL) are enriched in basic residues. Low complexity-rich tracts occupy residues 792-809 (FSTS…GTPF) and 845-873 (APSS…SPLP). Residues 935–946 (PPAPPGPLPSMP) show a composition bias toward pro residues. A compositionally biased stretch (polar residues) spans 953–963 (DQESLSAQTAE). Lys990 is covalently cross-linked (Glycyl lysine isopeptide (Lys-Gly) (interchain with G-Cter in ubiquitin)). Residues 996-999 (RFQV) carry the RFXV motif motif. Phosphoserine is present on Ser1014. Positions 1044-1056 (ETREALAESDRAA) are enriched in basic and acidic residues. Residues 1076-1086 (GGSSPILSQPS) are compositionally biased toward polar residues. Glycyl lysine isopeptide (Lys-Gly) (interchain with G-Cter in ubiquitin) cross-links involve residues Lys1123, Lys1136, and Lys1137. The tract at residues 1169 to 1222 (SKGSFPTSRRNSLQRSDLPGPGIMRRNSLSGSSTGSQEQRASKGVTFAGDVGRM) is disordered. Composition is skewed to polar residues over residues 1172 to 1183 (SFPTSRRNSLQR) and 1195 to 1207 (NSLS…SQEQ). Ser1196 is subject to Phosphoserine.

The protein belongs to the protein kinase superfamily. Ser/Thr protein kinase family. WNK subfamily. As to quaternary structure, interacts with the C-terminal region of KCNJ1. Interacts with WNK1 and WNK3. Interacts with KLHL3. Requires Mg(2+) as cofactor. Autophosphorylated at Ser-328 and Ser-332, promoting its activation. Phosphorylated by WNK1 and WNK3. Phosphorylated at Ser-572 in a MAP3K15/ASK3-dependent process in response to osmotic stress or hypotonic low-chloride stimulation. In terms of processing, ubiquitinated by the BCR(KLHL3) complex, leading to its degradation. Also ubiquitinated by the BCR(KLHL2) complex.

The protein localises to the cell junction. It localises to the tight junction. The enzyme catalyses L-seryl-[protein] + ATP = O-phospho-L-seryl-[protein] + ADP + H(+). It catalyses the reaction L-threonyl-[protein] + ATP = O-phospho-L-threonyl-[protein] + ADP + H(+). Activation requires autophosphorylation of Ser-328 and Ser-332. Autophosphorylation and subsequent activation is inhibited by increases in intracellular ionic strength: Cl(-) potently inhibits WNK4 kinase activity via direct binding. Also inhibited by K(+) ions. Serine/threonine-protein kinase component of the WNK4-SPAK/OSR1 kinase cascade, which acts as a key regulator of ion transport in the distal nephron and blood pressure. The WNK4-SPAK/OSR1 kinase cascade is composed of WNK4, which mediates phosphorylation and activation of downstream kinases OXSR1/OSR1 and STK39/SPAK. Following activation, OXSR1/OSR1 and STK39/SPAK catalyze phosphorylation of ion cotransporters, such as SLC12A1/NKCC2, SLC12A2/NKCC1, SLC12A3/NCC, SLC12A5/KCC2 or SLC12A6/KCC3, regulating their activity. Acts as a molecular switch that regulates the balance between renal salt reabsorption and K(+) secretion by modulating the activities of renal transporters and channels, including the Na-Cl cotransporter SLC12A3/NCC and the K(+) channel, KCNJ1/ROMK. Regulates NaCl reabsorption in the distal nephron by activating the thiazide-sensitive Na-Cl cotransporter SLC12A3/NCC in distal convoluted tubule cells of kidney: activates SLC12A3/NCC in a OXSR1/OSR1- and STK39/SPAK-dependent process. Also acts as a scaffold protein independently of its protein kinase activity: negatively regulates cell membrane localization of various transporters and channels (CFTR, KCNJ1/ROMK, SLC4A4, SLC26A9 and TRPV4) by clathrin-dependent endocytosis. Also inhibits the activity of the epithelial Na(+) channel (ENaC) SCNN1A, SCNN1B, SCNN1D in a inase-independent mechanism. May also phosphorylate NEDD4L. This chain is Serine/threonine-protein kinase WNK4, found in Rattus norvegicus (Rat).